Reading from the N-terminus, the 182-residue chain is Isopentenyl-diphosphate Delta-isomerase (182 aa).

Mn(2+) is bound by residues His-25 and His-32. The region spanning 30-164 (LLHLAFSSWL…PWAFSPWMVM (135 aa)) is the Nudix hydrolase domain. Cys-67 is an active-site residue. A Mg(2+)-binding site is contributed by Cys-67. Position 69 (His-69) interacts with Mn(2+). Residue Glu-87 coordinates Mg(2+). Residues Glu-114 and Glu-116 each coordinate Mn(2+). Residue Glu-116 is part of the active site.

It belongs to the IPP isomerase type 1 family. In terms of assembly, homodimer. The cofactor is Mg(2+). It depends on Mn(2+) as a cofactor.

It is found in the cytoplasm. The enzyme catalyses isopentenyl diphosphate = dimethylallyl diphosphate. The protein operates within isoprenoid biosynthesis; dimethylallyl diphosphate biosynthesis; dimethylallyl diphosphate from isopentenyl diphosphate: step 1/1. Its function is as follows. Catalyzes the 1,3-allylic rearrangement of the homoallylic substrate isopentenyl (IPP) to its highly electrophilic allylic isomer, dimethylallyl diphosphate (DMAPP). The sequence is that of Isopentenyl-diphosphate Delta-isomerase from Shigella boydii serotype 4 (strain Sb227).